A 460-amino-acid chain; its full sequence is Argininosuccinate lyase (460 aa).

Belongs to the lyase 1 family. Argininosuccinate lyase subfamily.

The protein resides in the cytoplasm. It catalyses the reaction 2-(N(omega)-L-arginino)succinate = fumarate + L-arginine. It participates in amino-acid biosynthesis; L-arginine biosynthesis; L-arginine from L-ornithine and carbamoyl phosphate: step 3/3. The polypeptide is Argininosuccinate lyase (Nitratidesulfovibrio vulgaris (strain ATCC 29579 / DSM 644 / CCUG 34227 / NCIMB 8303 / VKM B-1760 / Hildenborough) (Desulfovibrio vulgaris)).